The chain runs to 169 residues: UPF0316 protein Dde_2502 (169 aa).

Helical transmembrane passes span 1 to 21 (MITAASLLTALAVFIARLCDV), 38 to 58 (LAFSVAFFEAVIWVYAVSRVI), and 68 to 88 (LAFALGFASGTYAGITLEGVF).

Belongs to the UPF0316 family.

The protein resides in the cell membrane. This is UPF0316 protein Dde_2502 from Oleidesulfovibrio alaskensis (strain ATCC BAA-1058 / DSM 17464 / G20) (Desulfovibrio alaskensis).